The primary structure comprises 181 residues: ATP synthase subunit b, chloroplastic (181 aa).

Residues 31-50 (NVLNIAILLSGVVYLGRNFL) form a helical membrane-spanning segment.

Belongs to the ATPase B chain family. As to quaternary structure, F-type ATPases have 2 components, F(1) - the catalytic core - and F(0) - the membrane proton channel. F(1) has five subunits: alpha(3), beta(3), gamma(1), delta(1), epsilon(1). F(0) has four main subunits: a(1), b(1), b'(1) and c(10-14). The alpha and beta chains form an alternating ring which encloses part of the gamma chain. F(1) is attached to F(0) by a central stalk formed by the gamma and epsilon chains, while a peripheral stalk is formed by the delta, b and b' chains.

It is found in the plastid. Its subcellular location is the chloroplast thylakoid membrane. F(1)F(0) ATP synthase produces ATP from ADP in the presence of a proton or sodium gradient. F-type ATPases consist of two structural domains, F(1) containing the extramembraneous catalytic core and F(0) containing the membrane proton channel, linked together by a central stalk and a peripheral stalk. During catalysis, ATP synthesis in the catalytic domain of F(1) is coupled via a rotary mechanism of the central stalk subunits to proton translocation. In terms of biological role, component of the F(0) channel, it forms part of the peripheral stalk, linking F(1) to F(0). The polypeptide is ATP synthase subunit b, chloroplastic (Rhodomonas salina (Cryptomonas salina)).